Reading from the N-terminus, the 791-residue chain is DNA repair and recombination protein RAD54-like (791 aa).

Residues 1 to 20 are compositionally biased toward polar residues; that stretch reads MRRSLAPSQRIGQSTASRNA. Residues 1-53 are disordered; sequence MRRSLAPSQRIGQSTASRNAFTPPLLQKKNKRACQKDLRLDTDADEDKERKRF. The required for chromatin remodeling, strand pairing activities and coupling of ATPase activity stretch occupies residues 2 to 9; that stretch reads RRSLAPSQ. Position 22 is a phosphothreonine (threonine 22). A compositionally biased stretch (basic and acidic residues) spans 34-53; sequence CQKDLRLDTDADEDKERKRF. The Helicase ATP-binding domain maps to 175–349; it reads EGKKGDFNGC…FSLVNFVNPE (175 aa). 188-195 serves as a coordination point for ATP; that stretch reads DEMGLGKT. The DEGH box motif lies at 300 to 303; sequence DEGH. Positions 506–663 constitute a Helicase C-terminal domain; the sequence is LLDFMLAAIR…NNESSEKHFT (158 aa). The interval 747–791 is disordered; the sequence is KEVVESPESAAAEAESVEEESQPTQRKRPSPPLSDDSADEDFIGF. The span at 782–791 shows a compositional bias: acidic residues; the sequence is DSADEDFIGF.

Belongs to the SNF2/RAD54 helicase family. In terms of assembly, interacts (via N-terminus) with spn-A/Rad51.

Its subcellular location is the nucleus. Functionally, involved in mitotic DNA repair and meiotic recombination. Functions in the recombinational DNA repair pathway. Essential for interhomolog gene conversion (GC), but may have a less important role in intersister GC than spn-A/Rad51. In the presence of DNA, spn-A/Rad51 enhances the ATPase activity of okr/Rad54. The chain is DNA repair and recombination protein RAD54-like from Drosophila ananassae (Fruit fly).